Consider the following 103-residue polypeptide: MSTLADQALHNNNVGPIIRAGDLVEPVIETAEIDNPGKEITVEDRRAYVRIAAEGELILTRKTLEEQLGRPFNMQELEINLASFAGQIQADEDQIRFYFDKTM.

This sequence belongs to the TmoD/XamoD family. As to quaternary structure, the alkene monooxygenase multicomponent enzyme system is composed of an electron transfer component and a monooxygenase component interacting with the effector protein TmoD. The electron transfer component is composed of a ferredoxin reductase (TmoF) and a ferredoxin (TmoC), and the monooxygenase component is formed by a heterohexamer (dimer of heterotrimers) of two alpha subunits (TmoA), two beta subunits (TmoE) and two gamma subunits (TmoB).

Its pathway is xenobiotic degradation; toluene degradation. Functionally, effector component of the toluene-4-monooxygenase multicomponent enzyme system which catalyzes the O2- and NADH-dependent hydroxylation of toluene to form p-cresol. Required for optimal efficiency and specificity of the holoenzyme. This Ectopseudomonas mendocina (Pseudomonas mendocina) protein is Toluene-4-monooxygenase system, effector component.